The chain runs to 72 residues: Small ribosomal subunit protein eS17 (72 aa).

This sequence belongs to the eukaryotic ribosomal protein eS17 family.

The protein is Small ribosomal subunit protein eS17 of Nanoarchaeum equitans (strain Kin4-M).